The chain runs to 332 residues: Twinfilin-1 (332 aa).

An ADF-H 1 domain is found at 5–132 (SGIVAEQALL…VDLKNFDSAR (128 aa)). Phosphoserine occurs at positions 167 and 172. Positions 173 to 300 (PLSLTFRVNS…DKSLLMATNK (128 aa)) constitute an ADF-H 2 domain. The tract at residues 301–332 (EDSLDHGSNPDLPNKSNLKFNKPKGPLRKRRT) is disordered. The span at 321 to 332 (NKPKGPLRKRRT) shows a compositional bias: basic residues.

Belongs to the actin-binding proteins ADF family. Twinfilin subfamily. Interacts with G-actin; ADP-actin form.

It localises to the cytoplasm. It is found in the cytoskeleton. In terms of biological role, actin-binding protein involved in motile and morphological processes. Inhibits actin polymerization, likely by sequestering G-actin. Prevents actin filament assembly by forming a 1:1 complex with actin monomers, and inhibits the nucleotide exchange reaction of actin monomers. This chain is Twinfilin-1 (TWF1), found in Saccharomyces cerevisiae (strain ATCC 204508 / S288c) (Baker's yeast).